The primary structure comprises 504 residues: Ectoine/proline transporter ProP (504 aa).

The next 11 membrane-spanning stretches (helical) occupy residues 41 to 61 (FMEW…TAVF), 71 to 91 (LLAV…GGLV), 118 to 138 (LIGL…LLYL), 169 to 189 (FFGA…ASVV), 207 to 227 (DFGW…AVYL), 272 to 292 (LLIG…LTSY), 309 to 329 (AAVT…VGMW), 337 to 357 (PVYA…FLIM), 362 to 382 (IGAV…YVAL), 399 to 419 (GMGI…PLIT), and 430 to 450 (IVPA…LLFM). Residues 477–504 (NQDEDPNIDLSHMPFPDEENVGAEKQNA) are disordered.

Belongs to the major facilitator superfamily.

It localises to the cell membrane. Its activity is regulated as follows. Uptake is activated by osmotic stress. Inhibited by CCCP. Its function is as follows. Involved in the uptake of osmoprotectants. Can transport ectoine and proline. Protons are probably the coupling ions. This is Ectoine/proline transporter ProP from Corynebacterium glutamicum (strain ATCC 13032 / DSM 20300 / JCM 1318 / BCRC 11384 / CCUG 27702 / LMG 3730 / NBRC 12168 / NCIMB 10025 / NRRL B-2784 / 534).